A 162-amino-acid polypeptide reads, in one-letter code: MKKISSVFTMFALIAAILFSGFIPQQAYAETPLTQTATNETATIQLTSDVHTLAVINTFDGVADYLIRYKRLPDNYITKSQASALGWVASKGNLAEVAPGKSIGGDVFSNREGRLPSASGRTWREADINYVSGFRNADRLVYSSDWLIYKTTDHYATFTRIR.

An N-terminal signal peptide occupies residues Met1–Ala29. Residues Glu30–Leu53 constitute a propeptide that is removed on maturation. The active-site Proton acceptor is the Glu125. Residue His154 is the Proton donor of the active site.

Belongs to the ribonuclease N1/T1 family.

Its subcellular location is the secreted. Its function is as follows. This is a purine-specific ribonuclease. The chain is Ribonuclease from Bacillus intermedius.